The primary structure comprises 232 residues: DNA repair and recombination protein RadB (232 aa).

Belongs to the eukaryotic RecA-like protein family. RadB subfamily.

In terms of biological role, involved in DNA repair and in homologous recombination. May regulate the cleavage reactions of the branch-structured DNA. Has a very weak ATPase activity that is not stimulated by DNA. Binds DNA but does not promote DNA strands exchange. The protein is DNA repair and recombination protein RadB of Methanosphaera stadtmanae (strain ATCC 43021 / DSM 3091 / JCM 11832 / MCB-3).